Consider the following 453-residue polypeptide: Autophagy-related protein 18 (453 aa).

WD repeat units lie at residues 9 to 49 (KSSN…YTNN), 204 to 244 (AHKT…KLHQ), and 249 to 288 (SYAA…GAGA). The short motif at 245–249 (FRRGS) is the L/FRRG motif element. The tract at residues 284–324 (AGAGAKGRSSSNGGESPSLNSFDGSSDSSSPPGSTTNATRG) is disordered. Over residues 289–320 (KGRSSSNGGESPSLNSFDGSSDSSSPPGSTTN) the composition is skewed to low complexity.

The protein belongs to the WD repeat PROPPIN family. Component of the PI(3,5)P2 regulatory complex.

The protein resides in the preautophagosomal structure membrane. It is found in the vacuole membrane. Its subcellular location is the endosome membrane. In terms of biological role, the PI(3,5)P2 regulatory complex regulates both the synthesis and turnover of phosphatidylinositol 3,5-bisphosphate (PtdIns(3,5)P2). Necessary for proper vacuole morphology. Plays an important role in osmotically-induced vacuole fragmentation. Required for cytoplasm to vacuole transport (Cvt) vesicle formation, pexophagy and starvation-induced autophagy. Involved in correct ATG9 trafficking to the pre-autophagosomal structure. Might also be involved in premeiotic DNA replication. In Mycosarcoma maydis (Corn smut fungus), this protein is Autophagy-related protein 18 (ATG18).